The sequence spans 368 residues: UDP-N-acetylglucosamine--N-acetylmuramyl-(pentapeptide) pyrophosphoryl-undecaprenol N-acetylglucosamine transferase (368 aa).

UDP-N-acetyl-alpha-D-glucosamine-binding positions include T11 to G13, N123, R164, S188, I250, and Q295.

This sequence belongs to the glycosyltransferase 28 family. MurG subfamily.

The protein resides in the cell inner membrane. It carries out the reaction di-trans,octa-cis-undecaprenyl diphospho-N-acetyl-alpha-D-muramoyl-L-alanyl-D-glutamyl-meso-2,6-diaminopimeloyl-D-alanyl-D-alanine + UDP-N-acetyl-alpha-D-glucosamine = di-trans,octa-cis-undecaprenyl diphospho-[N-acetyl-alpha-D-glucosaminyl-(1-&gt;4)]-N-acetyl-alpha-D-muramoyl-L-alanyl-D-glutamyl-meso-2,6-diaminopimeloyl-D-alanyl-D-alanine + UDP + H(+). It functions in the pathway cell wall biogenesis; peptidoglycan biosynthesis. Functionally, cell wall formation. Catalyzes the transfer of a GlcNAc subunit on undecaprenyl-pyrophosphoryl-MurNAc-pentapeptide (lipid intermediate I) to form undecaprenyl-pyrophosphoryl-MurNAc-(pentapeptide)GlcNAc (lipid intermediate II). The chain is UDP-N-acetylglucosamine--N-acetylmuramyl-(pentapeptide) pyrophosphoryl-undecaprenol N-acetylglucosamine transferase from Solidesulfovibrio magneticus (strain ATCC 700980 / DSM 13731 / RS-1) (Desulfovibrio magneticus).